The sequence spans 461 residues: tRNA modification GTPase MnmE (461 aa).

3 residues coordinate (6S)-5-formyl-5,6,7,8-tetrahydrofolate: R23, E84, and R123. The region spanning 216 to 383 (GARAALIGRP…LGATVARLLL (168 aa)) is the TrmE-type G domain. N226 is a K(+) binding site. GTP is bound by residues 226–231 (NAGKSS), 245–251 (TPIPGTT), and 270–273 (DTAG). Residue S230 participates in Mg(2+) binding. 3 residues coordinate K(+): T245, I247, and T250. T251 lines the Mg(2+) pocket. K461 is a binding site for (6S)-5-formyl-5,6,7,8-tetrahydrofolate.

The protein belongs to the TRAFAC class TrmE-Era-EngA-EngB-Septin-like GTPase superfamily. TrmE GTPase family. Homodimer. Heterotetramer of two MnmE and two MnmG subunits. The cofactor is K(+).

It is found in the cytoplasm. Functionally, exhibits a very high intrinsic GTPase hydrolysis rate. Involved in the addition of a carboxymethylaminomethyl (cmnm) group at the wobble position (U34) of certain tRNAs, forming tRNA-cmnm(5)s(2)U34. The polypeptide is tRNA modification GTPase MnmE (Roseiflexus sp. (strain RS-1)).